We begin with the raw amino-acid sequence, 205 residues long: Protein N-terminal glutamine amidohydrolase (205 aa).

Residues Cys20, His74, and Asp90 contribute to the active site.

It belongs to the NTAQ1 family. In terms of assembly, monomer.

The catalysed reaction is N-terminal L-glutaminyl-[protein] + H2O = N-terminal L-glutamyl-[protein] + NH4(+). In terms of biological role, mediates the side-chain deamidation of N-terminal glutamine residues to glutamate, an important step in N-end rule pathway of protein degradation. Conversion of the resulting N-terminal glutamine to glutamate renders the protein susceptible to arginylation, polyubiquitination and degradation as specified by the N-end rule. Does not act on substrates with internal or C-terminal glutamine and does not act on non-glutamine residues in any position. This chain is Protein N-terminal glutamine amidohydrolase (tun), found in Drosophila erecta (Fruit fly).